The following is a 180-amino-acid chain: NAD(P)H-quinone oxidoreductase subunit I, chloroplastic (180 aa).

4Fe-4S ferredoxin-type domains are found at residues 55–84 (GRIHFEFDKCIACEVCVRVCPIDLPLVDWK) and 95–124 (LNYSIDFGVCIFCGNCVEYCPTNCLSMTEE). Residues Cys64, Cys67, Cys70, Cys74, Cys104, Cys107, Cys110, and Cys114 each contribute to the [4Fe-4S] cluster site.

Belongs to the complex I 23 kDa subunit family. NDH is composed of at least 16 different subunits, 5 of which are encoded in the nucleus. [4Fe-4S] cluster serves as cofactor.

It localises to the plastid. It is found in the chloroplast thylakoid membrane. The enzyme catalyses a plastoquinone + NADH + (n+1) H(+)(in) = a plastoquinol + NAD(+) + n H(+)(out). The catalysed reaction is a plastoquinone + NADPH + (n+1) H(+)(in) = a plastoquinol + NADP(+) + n H(+)(out). Functionally, NDH shuttles electrons from NAD(P)H:plastoquinone, via FMN and iron-sulfur (Fe-S) centers, to quinones in the photosynthetic chain and possibly in a chloroplast respiratory chain. The immediate electron acceptor for the enzyme in this species is believed to be plastoquinone. Couples the redox reaction to proton translocation, and thus conserves the redox energy in a proton gradient. This is NAD(P)H-quinone oxidoreductase subunit I, chloroplastic from Sorghum bicolor (Sorghum).